The primary structure comprises 208 residues: Protein GrpE (208 aa).

The disordered stretch occupies residues 1 to 62 (MTEKDESVKS…ETAVDPKDEE (62 aa)). Positions 46–55 (SNEESSEETA) are enriched in acidic residues.

Belongs to the GrpE family. In terms of assembly, homodimer.

The protein localises to the cytoplasm. Its function is as follows. Participates actively in the response to hyperosmotic and heat shock by preventing the aggregation of stress-denatured proteins, in association with DnaK and GrpE. It is the nucleotide exchange factor for DnaK and may function as a thermosensor. Unfolded proteins bind initially to DnaJ; upon interaction with the DnaJ-bound protein, DnaK hydrolyzes its bound ATP, resulting in the formation of a stable complex. GrpE releases ADP from DnaK; ATP binding to DnaK triggers the release of the substrate protein, thus completing the reaction cycle. Several rounds of ATP-dependent interactions between DnaJ, DnaK and GrpE are required for fully efficient folding. The protein is Protein GrpE of Staphylococcus haemolyticus (strain JCSC1435).